The following is a 336-amino-acid chain: tRNA N6-adenosine threonylcarbamoyltransferase (336 aa).

Residues His114 and His118 each coordinate Fe cation. Residues 136–140, Asp169, Gly182, Asp186, and Asn275 each bind substrate; that span reads LVSGG. Asp301 lines the Fe cation pocket.

It belongs to the KAE1 / TsaD family. The cofactor is Fe(2+).

The protein resides in the cytoplasm. The catalysed reaction is L-threonylcarbamoyladenylate + adenosine(37) in tRNA = N(6)-L-threonylcarbamoyladenosine(37) in tRNA + AMP + H(+). In terms of biological role, required for the formation of a threonylcarbamoyl group on adenosine at position 37 (t(6)A37) in tRNAs that read codons beginning with adenine. Is involved in the transfer of the threonylcarbamoyl moiety of threonylcarbamoyl-AMP (TC-AMP) to the N6 group of A37, together with TsaE and TsaB. TsaD likely plays a direct catalytic role in this reaction. In Streptococcus sanguinis (strain SK36), this protein is tRNA N6-adenosine threonylcarbamoyltransferase.